We begin with the raw amino-acid sequence, 1066 residues long: Phosphatidylinositol 4-kinase PIK1 (1066 aa).

The PIK helical domain occupies M1–N133. Phosphoserine occurs at positions 10 and 236. Disordered stretches follow at residues K218–L240, D303–N411, and N564–M624. Residues N342–D356 show a composition bias toward acidic residues. Polar residues-rich tracts occupy residues Q374–N411 and S570–L597. Phosphoserine is present on S384. At T394 the chain carries Phosphothreonine. 2 positions are modified to phosphoserine: S396 and S592. Low complexity predominate over residues S598–A609. The region spanning A770 to I1049 is the PI3K/PI4K catalytic domain. The segment at I776 to Y782 is G-loop. A catalytic loop region spans residues Q915–N923. The tract at residues H934–T958 is activation loop.

The protein belongs to the PI3/PI4-kinase family. Type III PI4K subfamily. Interacts with FRQ1.

It is found in the nucleus. Its subcellular location is the golgi apparatus. The protein localises to the trans-Golgi network. It catalyses the reaction a 1,2-diacyl-sn-glycero-3-phospho-(1D-myo-inositol) + ATP = a 1,2-diacyl-sn-glycero-3-phospho-(1D-myo-inositol 4-phosphate) + ADP + H(+). In terms of biological role, acts on phosphatidylinositol (PI) in the first committed step in the production of the second messenger inositol 1,4,5,-trisphosphate. PIK1 is part of a nuclear phosphoinositide cycle and could control cytokinesis through the actin cytoskeleton. Involved in the response to mating pheromone. The protein is Phosphatidylinositol 4-kinase PIK1 of Saccharomyces cerevisiae (strain ATCC 204508 / S288c) (Baker's yeast).